The following is a 370-amino-acid chain: Probable neutral protease 2 homolog ARB_03949 (370 aa).

An N-terminal signal peptide occupies residues 1-19 (MQLVAALAALGALVAPAVA). The propeptide occupies 20–188 (YPHAPMNETL…SIHSRALQKR (169 aa)). 2 disulfides stabilise this stretch: C196/C267 and C274/C292. Residue H316 participates in Zn(2+) binding. E317 is an active-site residue. Positions 320 and 331 each coordinate Zn(2+).

It belongs to the peptidase M35 family. Zn(2+) is required as a cofactor.

It is found in the secreted. The enzyme catalyses Preferential cleavage of bonds with hydrophobic residues in P1'. Also 3-Asn-|-Gln-4 and 8-Gly-|-Ser-9 bonds in insulin B chain.. Its function is as follows. Probable secreted metalloprotease that shows high activities on basic nuclear substrates such as histone and protamine. May be involved in virulence. The sequence is that of Probable neutral protease 2 homolog ARB_03949 from Arthroderma benhamiae (strain ATCC MYA-4681 / CBS 112371) (Trichophyton mentagrophytes).